Here is an 884-residue protein sequence, read N- to C-terminus: MIQKALGKIFGTKNDRIVKAYAKRVAKINALEPTYEKLSDDELKDKFSKLKEQVLAQKLTLDDALYDVFAIVREASKRVLKMRHFDVQLIGGMVLHDGNIAEMKTGEGKTLVATLPVVLNAMNKKGVHVVTVNDYLAKRDAADMGVLYNFLGFSVGVILGGNYDDKARKEAYNCDITYGTNNEFGFDYLRDNMKFRKEDKVQRGHNFVIVDEVDSILIDEARTPLIISGPTNRTLDGYIKANEVAKQMKCGEPADPLDKNSKATGDFTLDEKNRAVMITEAGISKAEKLFGVDNLYSLDNAVLSHYLDQALKANYLFEKDVHYVVKDGQVVIVDEFTGRLSEGRRFSEGLHQALEAKEGVKIQEESQTLADITFQNYFRLYDKLSGMTGTAQTEATEFSQIYKLEVISIPTNLPVKRIDQNDLIYKTEKEKFDAVIAQIKYLHAKGQPVLVGTASIEKSEKLHELLTKEKINHSVLNAKNHEKEAQIIANAGDKGAVTIATNMAGRGVDIKINDEVRALGGLYILGTERHESRRIDNQLRGRSGRQGDPGESRFYLSLEDNLLRIFGSDKIKHIMERLGLKEGESIESRLVTKAVENAQKKVESLHFESRKYILEYDDVANEQRKVIYRYRNELLEADFDLHDKIISNREDYIANVLDRLEIFDGDSKENFDIQKITSIIKSETTEILDENKLSKAEDYKELKEEIIKELRDFYEEKMAPVDNEQRKSIEKMLYLQIVDRDWREHLYQMDILKTGIGLRGYNHRDPLTEYKKESYNLFVELVMRLKSDSIRTLHSIRFKTQEEIEAERRAIAELQAKLQEEEQKKLKMSGADKGGEDLEETKNVPYRAPKKIGRNEPCPCGSGKKYKDCHGKSGPKKGLFANND.

ATP-binding positions include Q88, 106-110 (GEGKT), and D509. Positions 822 to 884 (EQKKLKMSGA…PKKGLFANND (63 aa)) are disordered. Residues 833-842 (KGGEDLEETK) show a composition bias toward basic and acidic residues. Positions 858, 860, 869, and 870 each coordinate Zn(2+).

Belongs to the SecA family. In terms of assembly, monomer and homodimer. Part of the essential Sec protein translocation apparatus which comprises SecA, SecYEG and auxiliary proteins SecDF-YajC and YidC. Zn(2+) serves as cofactor.

It localises to the cell inner membrane. The protein resides in the cytoplasm. It carries out the reaction ATP + H2O + cellular proteinSide 1 = ADP + phosphate + cellular proteinSide 2.. Functionally, part of the Sec protein translocase complex. Interacts with the SecYEG preprotein conducting channel. Has a central role in coupling the hydrolysis of ATP to the transfer of proteins into and across the cell membrane, serving as an ATP-driven molecular motor driving the stepwise translocation of polypeptide chains across the membrane. This is Protein translocase subunit SecA from Campylobacter hominis (strain ATCC BAA-381 / DSM 21671 / CCUG 45161 / LMG 19568 / NCTC 13146 / CH001A).